A 708-amino-acid chain; its full sequence is Vertnin (708 aa).

2 disordered regions span residues 473–499 and 561–636; these read PWKGEGGEGAGKATAGGPPAPHEFLPP and APAL…PVAE. Over residues 568-582 the composition is skewed to basic and acidic residues; it reads GLREAKEKQEKEAGR.

This sequence belongs to the vertnin family.

This is Vertnin (VRTN) from Ailuropoda melanoleuca (Giant panda).